The sequence spans 171 residues: Methylated-DNA--protein-cysteine methyltransferase (171 aa).

The active-site Nucleophile; methyl group acceptor is C139.

It belongs to the MGMT family.

The protein localises to the cytoplasm. The catalysed reaction is a 6-O-methyl-2'-deoxyguanosine in DNA + L-cysteinyl-[protein] = S-methyl-L-cysteinyl-[protein] + a 2'-deoxyguanosine in DNA. It catalyses the reaction a 4-O-methyl-thymidine in DNA + L-cysteinyl-[protein] = a thymidine in DNA + S-methyl-L-cysteinyl-[protein]. Functionally, involved in the cellular defense against the biological effects of O6-methylguanine (O6-MeG) and O4-methylthymine (O4-MeT) in DNA. Repairs the methylated nucleobase in DNA by stoichiometrically transferring the methyl group to a cysteine residue in the enzyme. This is a suicide reaction: the enzyme is irreversibly inactivated. This is Methylated-DNA--protein-cysteine methyltransferase from Salmonella typhi.